Here is a 732-residue protein sequence, read N- to C-terminus: Cyclopenase asqI (732 aa).

Zn(2+) is bound by residues H168, H172, and H200.

It belongs to the tyrosinase family. The cofactor is Zn(2+).

It catalyses the reaction (-)-cyclopenine = viridicatin + methyl isocyanate + H(+). It carries out the reaction (-)-4'-methoxycyclopenine = 4'-methoxyviridicatin + methyl isocyanate + H(+). The protein operates within secondary metabolite biosynthesis. It participates in alkaloid biosynthesis. It functions in the pathway mycotoxin biosynthesis. In terms of biological role, cyclopenase; part of the gene cluster that mediates the biosynthesis of the aspoquinolone mycotoxins. Within the pathway, the cyclopenase asqI catalyzes the conversion of 4'-methoxycyclopenin into 4'-methoxyviridicatin. Cyclopenin can also be converted into viridicatin by asqI. The first step of the pathway is catalyzed by the nonribosomal peptide synthetase asqK that condenses anthranilic acid and O-methyl-L-tyrosine to produce 4'-methoxycyclopeptin. 4'-methoxycyclopeptin is then converted to 4'-methoxydehydrocyclopeptin by the ketoglutarate-dependent dioxygenase asqJ. AsqJ also converts its first product 4'-methoxydehydrocyclopeptin to 4'-methoxycyclopenin. The following conversion of 4'-methoxycyclopenin into 4'-methoxyviridicatin is catalyzed by the cyclopenase asqI. 4'-methoxyviridicatin is the precursor of quinolone natural products, and is further converted to quinolinone B. The prenyltransferase asqH1 then catalyzes the canonical Friedel-Crafts alkylation of quinolinone B with dimethylallyl cation to yield dimethylallyl quinolone, which is subjected to FAD-dependent dehydrogenation by the FAD-linked oxidoreductase asqF to yield conjugated aryl diene. The delta(3') double bond then serves as the site of the second alkylation with DMAPP catalyzed by the prenyltransferase asqH2 to yield a carbenium ion intermediate, which can be attacked by H(2)O to yield a styrenyl quinolone containing a C3'-hydroxyprenyl chain. The FAD-dependent monooxygenase asqG performs epoxidation of the terminal C7'-C8' olefin. Finally, after dehydratation of the epoxide at C3 by asqC, the quinolone epoxide rearrangement protein asqO catalyzes an enzymatic 3-exo-tet cyclization to yield the cyclopropyl-THF ring system in aspoquinolone. The polypeptide is Cyclopenase asqI (Emericella nidulans (strain FGSC A4 / ATCC 38163 / CBS 112.46 / NRRL 194 / M139) (Aspergillus nidulans)).